A 392-amino-acid chain; its full sequence is Tryptophan synthase beta chain (392 aa).

K86 carries the N6-(pyridoxal phosphate)lysine modification.

It belongs to the TrpB family. Tetramer of two alpha and two beta chains. Pyridoxal 5'-phosphate serves as cofactor.

It carries out the reaction (1S,2R)-1-C-(indol-3-yl)glycerol 3-phosphate + L-serine = D-glyceraldehyde 3-phosphate + L-tryptophan + H2O. Its pathway is amino-acid biosynthesis; L-tryptophan biosynthesis; L-tryptophan from chorismate: step 5/5. Its function is as follows. The beta subunit is responsible for the synthesis of L-tryptophan from indole and L-serine. The chain is Tryptophan synthase beta chain from Methanocorpusculum labreanum (strain ATCC 43576 / DSM 4855 / Z).